The following is a 252-amino-acid chain: Glycine-rich cell wall structural protein 1.0 (252 aa).

The signal sequence occupies residues Met1–Leu30. Positions Gly231 to Pro252 are disordered.

In terms of tissue distribution, expressed in young hypocotyls.

It is found in the secreted. Its subcellular location is the cell wall. Its function is as follows. Responsible for plasticity of the cell wall. This chain is Glycine-rich cell wall structural protein 1.0, found in Phaseolus vulgaris (Kidney bean).